The primary structure comprises 427 residues: ATP-dependent RNA helicase DDX39A (427 aa).

Positions 1–19 (MAEQDVENDLLDYDEEEEP) are enriched in acidic residues. The interval 1 to 34 (MAEQDVENDLLDYDEEEEPQAPQESTPAPPKKDI) is disordered. A2 is modified (N-acetylalanine). K31 is covalently cross-linked (Glycyl lysine isopeptide (Lys-Gly) (interchain with G-Cter in SUMO2)). K35 bears the N6-acetyllysine; alternate mark. A Glycyl lysine isopeptide (Lys-Gly) (interchain with G-Cter in SUMO2); alternate cross-link involves residue K35. Position 37 is a phosphoserine (S37). The Q motif motif lies at 44-72 (SGFRDFLLKPELLRAIVDCGFEHPSEVQH). Residues 75–248 (IPQAILGMDV…RKFMQDPMEV (174 aa)) form the Helicase ATP-binding domain. An ATP-binding site is contributed by 88–95 (AKSGMGKT). Residues K154 and K162 each participate in a glycyl lysine isopeptide (Lys-Gly) (interchain with G-Cter in SUMO2) cross-link. T171 carries the post-translational modification Phosphothreonine. The short motif at 195–198 (DECD) is the DECD box element. Glycyl lysine isopeptide (Lys-Gly) (interchain with G-Cter in SUMO2) cross-links involve residues K240 and K255. The 162-residue stretch at 260 to 421 (GLQQYYVKLK…ELPEEIDIST (162 aa)) folds into the Helicase C-terminal domain. S426 is modified (phosphoserine).

Belongs to the DEAD box helicase family. DECD subfamily. As to quaternary structure, binds ALYREF/THOC4 and DDX39B/BAT1. Interacts with the apo-AREX complex component SARNP. Interacts with MX1. Interacts with MCM3AP isoform GANP. Interacts with ECD. Interacts with PHAX; this interaction stimulates PHAX RNA binding activity. (Microbial infection) Interacts with human cytomegalovirus/HHV-5 protein UL69. Post-translationally, SUMOylated by RANBP2; SUMOylation modification affects its ability to bind RNA. Detected in testis, and at lower levels in brain, kidney, lung, thymus, spleen and salivary gland.

The protein localises to the nucleus. It localises to the cytoplasm. The enzyme catalyses ATP + H2O = ADP + phosphate + H(+). Helicase that plays an essential role in mRNA export and is involved in multiple steps in RNA metabolism including alternative splicing. Regulates nuclear mRNA export to the cytoplasm through association with ECD. Also involved in spliceosomal uridine-rich small nuclear RNA (U snRNA) export by stimulating the RNA binding of adapter PHAX. Plays a role in the negative regulation of type I IFN production by increasing the nuclear retention of antiviral transcripts and thus reducing their protein expression. Independently of the interferon pathway, plays an antiviral role against alphaviruses by binding to a 5' conserved sequence element in the viral genomic RNA. This Homo sapiens (Human) protein is ATP-dependent RNA helicase DDX39A (DDX39A).